Consider the following 204-residue polypeptide: uncharacterized protein (204 aa).

The signal sequence occupies residues 1–17; sequence MKRLVTGLLALSLFLAA. Residues 17-100 form a disordered region; it reads ACGQDSDQQK…NNNQANNNQK (84 aa). Cys18 is lipidated: N-palmitoyl cysteine. Residue Cys18 is the site of S-diacylglycerol cysteine attachment. Over residues 23 to 70 the composition is skewed to basic and acidic residues; it reads DQQKDGNKEKDDKAKTEQQDKKTNDSSKDKKDNKDDSKDVNKDNKDNS. A compositionally biased stretch (low complexity) spans 71-100; the sequence is ANDNQQQSNSNATNNDQNQTNNNQANNNQK.

It localises to the cell membrane. This is an uncharacterized protein from Staphylococcus aureus (strain MSSA476).